The following is a 197-amino-acid chain: Mediator of RNA polymerase II transcription subunit 10 (197 aa).

Residues 1 to 39 (MSSTAGTRRPRQITPTSPSPSPEPQPGATNGSSSTINVA) form a disordered region. The span at 27–37 (GATNGSSSTIN) shows a compositional bias: polar residues.

Belongs to the Mediator complex subunit 10 family. In terms of assembly, component of the Mediator complex.

It localises to the nucleus. In terms of biological role, component of the Mediator complex, a coactivator involved in the regulated transcription of nearly all RNA polymerase II-dependent genes. Mediator functions as a bridge to convey information from gene-specific regulatory proteins to the basal RNA polymerase II transcription machinery. Mediator is recruited to promoters by direct interactions with regulatory proteins and serves as a scaffold for the assembly of a functional preinitiation complex with RNA polymerase II and the general transcription factors. In Mycosarcoma maydis (Corn smut fungus), this protein is Mediator of RNA polymerase II transcription subunit 10 (NUT2).